The following is a 119-amino-acid chain: MASTYRTTIRANTYQFRETTMIDPKKIEQIARQVHESMPKGIREFGEDIEKKIRQTLQSQLTRLDLVSREEFDVQTQVLLRTREKLALLEQRLSELEARDKPEEVKPAPAIPPVDPQQE.

Residues 79 to 99 adopt a coiled-coil conformation; sequence LLRTREKLALLEQRLSELEAR. Positions 96–106 are enriched in basic and acidic residues; it reads LEARDKPEEVK. The interval 96–119 is disordered; sequence LEARDKPEEVKPAPAIPPVDPQQE. A compositionally biased stretch (pro residues) spans 109 to 119; the sequence is PAIPPVDPQQE.

This sequence belongs to the UbiK family. As to quaternary structure, homotrimer.

The protein resides in the cytoplasm. It functions in the pathway cofactor biosynthesis; ubiquinone biosynthesis. Required for efficient ubiquinone (coenzyme Q) biosynthesis under aerobic conditions. UbiK is probably an accessory factor of Ubi enzymes and facilitates ubiquinone biosynthesis by acting as an assembly factor, a targeting factor, or both. Dispensable for ubiquinone biosynthesis under anaerobiosis. Required for proliferation in macrophages and virulence in mice. Significantly contributes to colonization and invasion as well as host inflammation and innate immunity after infection. In vitro, has membrane fusogenic activity at acidic pH. In Salmonella typhimurium (strain LT2 / SGSC1412 / ATCC 700720), this protein is Ubiquinone biosynthesis accessory factor UbiK.